The following is a 122-amino-acid chain: Large ribosomal subunit protein uL14 (122 aa).

The protein belongs to the universal ribosomal protein uL14 family. As to quaternary structure, part of the 50S ribosomal subunit. Forms a cluster with proteins L3 and L19. In the 70S ribosome, L14 and L19 interact and together make contacts with the 16S rRNA in bridges B5 and B8.

In terms of biological role, binds to 23S rRNA. Forms part of two intersubunit bridges in the 70S ribosome. This Bacillus licheniformis (strain ATCC 14580 / DSM 13 / JCM 2505 / CCUG 7422 / NBRC 12200 / NCIMB 9375 / NCTC 10341 / NRRL NRS-1264 / Gibson 46) protein is Large ribosomal subunit protein uL14.